The chain runs to 151 residues: Aspartate 1-decarboxylase (151 aa).

Residue Ser26 is the Schiff-base intermediate with substrate; via pyruvic acid of the active site. Ser26 carries the pyruvic acid (Ser) modification. Thr58 is a substrate binding site. Tyr59 (proton donor) is an active-site residue. Substrate is bound at residue 74–76; it reads GGA.

It belongs to the PanD family. In terms of assembly, heterooctamer of four alpha and four beta subunits. The cofactor is pyruvate. Post-translationally, is synthesized initially as an inactive proenzyme, which is activated by self-cleavage at a specific serine bond to produce a beta-subunit with a hydroxyl group at its C-terminus and an alpha-subunit with a pyruvoyl group at its N-terminus.

The protein resides in the cytoplasm. The enzyme catalyses L-aspartate + H(+) = beta-alanine + CO2. The protein operates within cofactor biosynthesis; (R)-pantothenate biosynthesis; beta-alanine from L-aspartate: step 1/1. In terms of biological role, catalyzes the pyruvoyl-dependent decarboxylation of aspartate to produce beta-alanine. This chain is Aspartate 1-decarboxylase, found in Crocosphaera subtropica (strain ATCC 51142 / BH68) (Cyanothece sp. (strain ATCC 51142)).